The primary structure comprises 219 residues: Thiopurine S-methyltransferase (219 aa).

Positions 10, 45, 66, and 123 each coordinate S-adenosyl-L-methionine.

Belongs to the class I-like SAM-binding methyltransferase superfamily. TPMT family.

The protein localises to the cytoplasm. It catalyses the reaction S-adenosyl-L-methionine + a thiopurine = S-adenosyl-L-homocysteine + a thiopurine S-methylether.. The protein is Thiopurine S-methyltransferase of Bordetella bronchiseptica (strain ATCC BAA-588 / NCTC 13252 / RB50) (Alcaligenes bronchisepticus).